The primary structure comprises 206 residues: Thymidylate kinase (206 aa).

An ATP-binding site is contributed by 10–17 (GNDGSGKS).

It belongs to the thymidylate kinase family.

The catalysed reaction is dTMP + ATP = dTDP + ADP. Functionally, phosphorylation of dTMP to form dTDP in both de novo and salvage pathways of dTTP synthesis. In Caldicellulosiruptor saccharolyticus (strain ATCC 43494 / DSM 8903 / Tp8T 6331), this protein is Thymidylate kinase.